The chain runs to 132 residues: uncharacterized protein (132 aa).

Residues 17–75 form a disordered region; that stretch reads RSAVPRWPHLSSQSGVEPPDRWTGTPGWPSRDQEAPGSMMPPAAAQPSAHGALVPPATA. Low complexity predominate over residues 51–65; the sequence is APGSMMPPAAAQPSA.

As to expression, expressed exclusively in heart.

It localises to the cytoplasm. This is an uncharacterized protein from Homo sapiens (Human).